The chain runs to 157 residues: Probable succinate transporter subunit YjjB (157 aa).

4 helical membrane-spanning segments follow: residues Phe-8–Phe-28, Met-50–Val-70, Val-87–Ile-107, and Phe-129–Trp-149.

It belongs to the ThrE exporter (TC 2.A.79) family. As to quaternary structure, the transporter is composed of YjjB and YjjP.

It is found in the cell inner membrane. Its function is as follows. Involved in succinate export with YjjP. Both proteins are required for export. The sequence is that of Probable succinate transporter subunit YjjB from Escherichia coli (strain SE11).